The following is a 676-amino-acid chain: Periplasmic alpha-amylase (676 aa).

The signal sequence occupies residues 1 to 17; that stretch reads MKLAACFLTLLPGFAVA. 2 disulfides stabilise this stretch: Cys-57/Cys-75 and Cys-121/Cys-537. Asn-314 provides a ligand contact to Ca(2+). Catalysis depends on Asp-460, which acts as the Nucleophile. Ca(2+) is bound at residue His-464. Catalysis depends on Glu-503, which acts as the Proton donor.

It belongs to the glycosyl hydrolase 13 family. As to quaternary structure, monomer. Ca(2+) serves as cofactor.

It localises to the periplasm. It carries out the reaction Endohydrolysis of (1-&gt;4)-alpha-D-glucosidic linkages in polysaccharides containing three or more (1-&gt;4)-alpha-linked D-glucose units.. Since only maltooligosaccharides up to a chain length of 6 glucose units are actively transported through the cytoplasmic membrane via the membrane-bound complex of three proteins, MalF, MalG, and MalK, longer maltooligosaccharides must first be degraded by the periplasmic alpha-amylase, the MalS protein. The protein is Periplasmic alpha-amylase (malS) of Escherichia coli (strain K12).